Consider the following 357-residue polypeptide: Pheromone receptor 1 (357 aa).

Transmembrane regions (helical) follow at residues 5–25 (ITPF…AWHI), 32–52 (LIML…NSMV), 67–90 (LSVR…ARKL), 110–130 (VIID…LMIV), 145–165 (WPMM…VIVV), 206–226 (LLLL…GTIA), and 268–288 (LILA…MFGL). The interval 338 to 357 (ANTSTKSEKSDIDMRGSEAA) is disordered. Residues 343-357 (KSEKSDIDMRGSEAA) show a composition bias toward basic and acidic residues.

Belongs to the G-protein coupled receptor 4 family.

It localises to the membrane. Its function is as follows. Receptor for the A2 pheromone, a prenylated mating factor. This Mycosarcoma maydis (Corn smut fungus) protein is Pheromone receptor 1 (PRA1).